Consider the following 205-residue polypeptide: N-(5'-phosphoribosyl)anthranilate isomerase (205 aa).

Belongs to the TrpF family.

It carries out the reaction N-(5-phospho-beta-D-ribosyl)anthranilate = 1-(2-carboxyphenylamino)-1-deoxy-D-ribulose 5-phosphate. Its pathway is amino-acid biosynthesis; L-tryptophan biosynthesis; L-tryptophan from chorismate: step 3/5. The polypeptide is N-(5'-phosphoribosyl)anthranilate isomerase (Thermotoga neapolitana (strain ATCC 49049 / DSM 4359 / NBRC 107923 / NS-E)).